The sequence spans 504 residues: Sodium-coupled neutral amino acid symporter 2 (504 aa).

The tract at residues 1-22 (MKKTEMGRFNISPDEDSSSYSS) is disordered. Residues 1–76 (MKKTEMGRFN…HPGTTSFGMS (76 aa)) are Cytoplasmic-facing. Residues 1–96 (MKKTEMGRFN…SGILGLSYAM (96 aa)) are regulates protein turnover upon amino acid deprivation. A phosphoserine mark is found at serine 12, serine 21, serine 22, and serine 55. The helical transmembrane segment at 77-96 (VFNLSNAIVGSGILGLSYAM) threads the bilayer. Asparagine 82 contacts Na(+). At 97–102 (ANTGIA) the chain is on the extracellular side. A helical membrane pass occupies residues 103–123 (LFIILLTFVSIFSLYSVHLLL). Topologically, residues 124–158 (KTANEGGSLLYEQLGHKAYGLAGKLAASGSITMQN) are cytoplasmic. Residues 159–177 (IGAMSSYLFIVKYELPLVI) form a helical membrane-spanning segment. Residues 178–188 (KALMNIEDTNG) are Extracellular-facing. A helical transmembrane segment spans residues 189–209 (LWYLNGDYLVLLVSFVLILPL). Residues 210 to 217 (SLLRNLGY) are Cytoplasmic-facing. Residues 218–238 (LGYTSGLSLLCMIFFLIVVIC) traverse the membrane as a helical segment. At 239–290 (KKFQIPCPVEVALMANETVNGTFTQVALAALASNSTAADTCRPRYFIFNSQT) the chain is on the extracellular side. Cysteine 245 and cysteine 279 form a disulfide bridge. N-linked (GlcNAc...) asparagine glycans are attached at residues asparagine 254, asparagine 258, and asparagine 272. The chain crosses the membrane as a helical span at residues 291–311 (VYAVPILTFSFVCHPAVLPIY). Over 312-327 (EELKSRSRRRMMNVSK) the chain is Cytoplasmic. The helical transmembrane segment at 328–348 (ISFFAMFLMYLLAALFGYLTF) threads the bilayer. Residues 349–369 (YEHVESELLHTYSAIVGTDIL) lie on the Extracellular side of the membrane. The chain crosses the membrane as a helical span at residues 370 to 390 (LLVVRLAVLVAVTLTVPVVIF). Residue threonine 384 coordinates Na(+). The Cytoplasmic portion of the chain corresponds to 391-411 (PIRSSVTHLLCPTKEFSWFRH). A helical membrane pass occupies residues 412-432 (SVITVTILAFTNLLVIFVPTI). At 433-434 (RD) the chain is on the extracellular side. The helical transmembrane segment at 435–455 (IFGFIGASAAAMLIFILPSAF) threads the bilayer. Residues 456-470 (YIKLVKKEPMRSVQK) are Cytoplasmic-facing. The helical transmembrane segment at 471-493 (IGALCFLLSGVVVMIGSMGLIVL) threads the bilayer. The Extracellular portion of the chain corresponds to 494 to 504 (DWVHDASAGGH).

The protein belongs to the amino acid/polyamine transporter 2 family. Polyubiquitination by NEDD4L regulates the degradation and the activity of SLC38A2. As to expression, widely expressed. Expressed in skeletal muscle and adipose tissue (at protein level). Expressed by glutamatergic and GABAergic neurons together with astrocytes and other non-neuronal cells in the cerebral cortex (at protein level). Widely expressed in the central nervous systeme where, it is enriched in the spinal cord and the brainstem nuclei, especially those of the auditory system.

Its subcellular location is the cell membrane. It carries out the reaction L-alanine(in) + Na(+)(in) = L-alanine(out) + Na(+)(out). It catalyses the reaction glycine(in) + Na(+)(in) = glycine(out) + Na(+)(out). The enzyme catalyses L-serine(in) + Na(+)(in) = L-serine(out) + Na(+)(out). The catalysed reaction is L-proline(in) + Na(+)(in) = L-proline(out) + Na(+)(out). It carries out the reaction L-methionine(in) + Na(+)(in) = L-methionine(out) + Na(+)(out). It catalyses the reaction L-histidine(in) + Na(+)(in) = L-histidine(out) + Na(+)(out). The enzyme catalyses L-asparagine(in) + Na(+)(in) = L-asparagine(out) + Na(+)(out). The catalysed reaction is L-glutamine(in) + Na(+)(in) = L-glutamine(out) + Na(+)(out). It carries out the reaction L-threonine(in) + Na(+)(in) = L-threonine(out) + Na(+)(out). It catalyses the reaction L-leucine(in) + Na(+)(in) = L-leucine(out) + Na(+)(out). The enzyme catalyses L-phenylalanine(in) + Na(+)(in) = L-phenylalanine(out) + Na(+)(out). With respect to regulation, inhibited by N-methyl-D-glucamine. Inhibited by choline. Allosteric regulation of sodium ions binding by pH. Symporter that cotransports neutral amino acids and sodium ions from the extracellular to the intracellular side of the cell membrane. The transport is pH-sensitive, Li(+)-intolerant, electrogenic, driven by the Na(+) electrochemical gradient and cotransports of neutral amino acids and sodium ions with a stoichiometry of 1:1. May function in the transport of amino acids at the blood-brain barrier. May function in the transport of amino acids in the supply of maternal nutrients to the fetus through the placenta. Maintains a key metabolic glutamine/glutamate balance underpinning retrograde signaling by dendritic release of the neurotransmitter glutamate. Transports L-proline in differentiating osteoblasts for the efficient synthesis of proline-enriched proteins and provides proline essential for osteoblast differentiation and bone formation during bone development. This chain is Sodium-coupled neutral amino acid symporter 2, found in Rattus norvegicus (Rat).